A 215-amino-acid polypeptide reads, in one-letter code: Osmoprotectant import permease protein OsmW (215 aa).

One can recognise an ABC transmembrane type-1 domain in the interval 18–202 (TFQHLWLVAL…LLAIVLDWLL (185 aa)). Transmembrane regions (helical) follow at residues 24 to 44 (LVALAVGLAIIIGVPLGVLIV), 51 to 73 (TPVLGAATLLLTIPSIALFGLMI), 78 to 100 (LIGHGIGVLPAVTAVFLYSLLPI), 132 to 152 (WVEIPMALPVIFGGIRTAVVM), 153 to 173 (NIGVMAIAAVIGAGGLGLLLL), and 183 to 203 (MLIAGALMICLLAIVLDWLLH).

It belongs to the binding-protein-dependent transport system permease family. The complex is composed of two ATP-binding proteins (OsmV), two transmembrane proteins (OsmW and OsmY) and a solute-binding protein (OsmX).

It is found in the cell inner membrane. Part of the OsmU ABC transporter complex, which is involved in the uptake of osmoprotectants such as choline-O-sulfate and glycine betaine. Probably responsible for the translocation of the substrate across the membrane. The chain is Osmoprotectant import permease protein OsmW (osmW) from Salmonella typhimurium (strain LT2 / SGSC1412 / ATCC 700720).